A 99-amino-acid chain; its full sequence is Putative transmembrane protein ORF13 (99 aa).

The next 3 helical transmembrane spans lie at 8–28 (IATF…MAGI), 42–62 (LGLF…YIIV), and 73–93 (GPIT…AIIA).

The protein resides in the host membrane. This chain is Putative transmembrane protein ORF13, found in His1 virus (isolate Australia/Victoria) (His1V).